Here is a 372-residue protein sequence, read N- to C-terminus: Alanine dehydrogenase 1 (372 aa).

Histidine 94 is an active-site residue. Residue 170–200 participates in NAD(+) binding; that stretch reads TYVIFGGGVAATNAANVALGLNAKVIIIELN.

The protein belongs to the AlaDH/PNT family.

The enzyme catalyses L-alanine + NAD(+) + H2O = pyruvate + NH4(+) + NADH + H(+). It functions in the pathway amino-acid degradation; L-alanine degradation via dehydrogenase pathway; NH(3) and pyruvate from L-alanine: step 1/1. In terms of biological role, may play a role in cell wall synthesis as L-alanine is an important constituent of the peptidoglycan layer. The protein is Alanine dehydrogenase 1 (ald1) of Staphylococcus aureus (strain MRSA252).